A 77-amino-acid polypeptide reads, in one-letter code: Translation initiation factor IF-1, chloroplastic (77 aa).

An S1-like domain is found at 1–71; the sequence is MKEQKWIHEG…TRGRIIYRLR (71 aa).

This sequence belongs to the IF-1 family. As to quaternary structure, component of the 30S ribosomal translation pre-initiation complex which assembles on the 30S ribosome in the order IF-2 and IF-3, IF-1 and N-formylmethionyl-tRNA(fMet); mRNA recruitment can occur at any time during PIC assembly.

The protein localises to the plastid. The protein resides in the chloroplast. In terms of biological role, one of the essential components for the initiation of protein synthesis. Stabilizes the binding of IF-2 and IF-3 on the 30S subunit to which N-formylmethionyl-tRNA(fMet) subsequently binds. Helps modulate mRNA selection, yielding the 30S pre-initiation complex (PIC). Upon addition of the 50S ribosomal subunit IF-1, IF-2 and IF-3 are released leaving the mature 70S translation initiation complex. This is Translation initiation factor IF-1, chloroplastic from Brexia madagascariensis.